A 379-amino-acid chain; its full sequence is Chaperone protein DnaJ (379 aa).

In terms of domain architecture, J spans 5–70 (DYYEVLGVSR…QKRAAYDQYG (66 aa)). The CR-type zinc finger occupies 134-212 (GVTKEIRIPT…CHGHGRVEKS (79 aa)). Residues cysteine 147, cysteine 150, cysteine 164, cysteine 167, cysteine 186, cysteine 189, cysteine 200, and cysteine 203 each coordinate Zn(2+). CXXCXGXG motif repeat units follow at residues 147-154 (CDVCHGSG), 164-171 (CPTCHGAG), 186-193 (CPHCHGRG), and 200-207 (CNKCHGHG).

This sequence belongs to the DnaJ family. Homodimer. The cofactor is Zn(2+).

The protein localises to the cytoplasm. Functionally, participates actively in the response to hyperosmotic and heat shock by preventing the aggregation of stress-denatured proteins and by disaggregating proteins, also in an autonomous, DnaK-independent fashion. Unfolded proteins bind initially to DnaJ; upon interaction with the DnaJ-bound protein, DnaK hydrolyzes its bound ATP, resulting in the formation of a stable complex. GrpE releases ADP from DnaK; ATP binding to DnaK triggers the release of the substrate protein, thus completing the reaction cycle. Several rounds of ATP-dependent interactions between DnaJ, DnaK and GrpE are required for fully efficient folding. Also involved, together with DnaK and GrpE, in the DNA replication of plasmids through activation of initiation proteins. The protein is Chaperone protein DnaJ of Yersinia pestis bv. Antiqua (strain Antiqua).